The sequence spans 419 residues: D-amino acid dehydrogenase (419 aa).

3–17 (VIVLGSGVIGVASAY) provides a ligand contact to FAD.

This sequence belongs to the DadA oxidoreductase family. It depends on FAD as a cofactor.

The enzyme catalyses a D-alpha-amino acid + A + H2O = a 2-oxocarboxylate + AH2 + NH4(+). Its pathway is amino-acid degradation; D-alanine degradation; NH(3) and pyruvate from D-alanine: step 1/1. In terms of biological role, oxidative deamination of D-amino acids. The sequence is that of D-amino acid dehydrogenase from Acinetobacter baylyi (strain ATCC 33305 / BD413 / ADP1).